Here is a 385-residue protein sequence, read N- to C-terminus: Probable tRNA sulfurtransferase (385 aa).

Residues 57-160 (DGVIERVKKV…RGNAYVFTDK (104 aa)) enclose the THUMP domain. ATP is bound by residues 180–181 (ML), 205–206 (YY), arginine 262, glycine 284, and glutamine 293.

This sequence belongs to the ThiI family.

The protein resides in the cytoplasm. The enzyme catalyses [ThiI sulfur-carrier protein]-S-sulfanyl-L-cysteine + a uridine in tRNA + 2 reduced [2Fe-2S]-[ferredoxin] + ATP + H(+) = [ThiI sulfur-carrier protein]-L-cysteine + a 4-thiouridine in tRNA + 2 oxidized [2Fe-2S]-[ferredoxin] + AMP + diphosphate. The catalysed reaction is [ThiS sulfur-carrier protein]-C-terminal Gly-Gly-AMP + S-sulfanyl-L-cysteinyl-[cysteine desulfurase] + AH2 = [ThiS sulfur-carrier protein]-C-terminal-Gly-aminoethanethioate + L-cysteinyl-[cysteine desulfurase] + A + AMP + 2 H(+). Its pathway is cofactor biosynthesis; thiamine diphosphate biosynthesis. Its function is as follows. Catalyzes the ATP-dependent transfer of a sulfur to tRNA to produce 4-thiouridine in position 8 of tRNAs, which functions as a near-UV photosensor. Also catalyzes the transfer of sulfur to the sulfur carrier protein ThiS, forming ThiS-thiocarboxylate. This is a step in the synthesis of thiazole, in the thiamine biosynthesis pathway. The sulfur is donated as persulfide by IscS. The chain is Probable tRNA sulfurtransferase from Clostridium perfringens (strain ATCC 13124 / DSM 756 / JCM 1290 / NCIMB 6125 / NCTC 8237 / Type A).